The following is a 265-amino-acid chain: MTLRLSAIELRHSDGTLALRGLDLSIARGERVAIIGPSGAGKTTLLNLLASALPPSAGQLQVLGTDPWQLSSKRRQRLRSRIALIHQAPPLPARQRVVTAVSAGRLGQWGLGKSLLNLLHPLDISGAREVLARLDLADKLFERCQQLSGGQLQRVGIARALYQQPELLLADEPVSAMDPRLADHTLALLGQHAIEHNVTLVASLHAVELALAHFPRIIGVRDGRIHFDLAASEVGREHLDTLYANEQLSPQPVSDAAETRWTPRC.

One can recognise an ABC transporter domain in the interval leucine 3–glutamine 247. Glycine 36 to threonine 43 contacts ATP.

This sequence belongs to the ABC transporter superfamily. Phosphonates importer (TC 3.A.1.9.1) family. As to quaternary structure, the complex is composed of two ATP-binding proteins (PhnC), two transmembrane proteins (PhnE) and a solute-binding protein (PhnD).

It localises to the cell inner membrane. The enzyme catalyses phosphonate(out) + ATP + H2O = phosphonate(in) + ADP + phosphate + H(+). Functionally, part of the ABC transporter complex PhnCDE involved in phosphonates import. Responsible for energy coupling to the transport system. The protein is Phosphonates import ATP-binding protein PhnC 1 of Pseudomonas syringae pv. syringae (strain B728a).